Reading from the N-terminus, the 324-residue chain is Glyoxylate/hydroxypyruvate reductase B (324 aa).

Active-site residues include Arg237 and Glu266. The active-site Proton donor is His285.

The protein belongs to the D-isomer specific 2-hydroxyacid dehydrogenase family. GhrB subfamily. As to quaternary structure, homodimer.

Its subcellular location is the cytoplasm. It catalyses the reaction glycolate + NADP(+) = glyoxylate + NADPH + H(+). The enzyme catalyses (R)-glycerate + NAD(+) = 3-hydroxypyruvate + NADH + H(+). The catalysed reaction is (R)-glycerate + NADP(+) = 3-hydroxypyruvate + NADPH + H(+). Its function is as follows. Catalyzes the NADPH-dependent reduction of glyoxylate and hydroxypyruvate into glycolate and glycerate, respectively. This Shigella flexneri protein is Glyoxylate/hydroxypyruvate reductase B.